The sequence spans 291 residues: Tyrosine recombinase XerD (291 aa).

The Core-binding (CB) domain occupies 1–82 (MEEGLIDRLL…ACKRLYIWME (82 aa)). The Tyr recombinase domain occupies 103–285 (NIPTLITEQQ…ANVWLQGVVK (183 aa)). Catalysis depends on residues Arg-143, Lys-167, His-237, Arg-240, and His-263. Residue Tyr-272 is the O-(3'-phospho-DNA)-tyrosine intermediate of the active site.

It belongs to the 'phage' integrase family. XerD subfamily. As to quaternary structure, forms a cyclic heterotetrameric complex composed of two molecules of XerC and two molecules of XerD.

It localises to the cytoplasm. Site-specific tyrosine recombinase, which acts by catalyzing the cutting and rejoining of the recombining DNA molecules. The XerC-XerD complex is essential to convert dimers of the bacterial chromosome into monomers to permit their segregation at cell division. It also contributes to the segregational stability of plasmids. In Neisseria meningitidis serogroup B (strain ATCC BAA-335 / MC58), this protein is Tyrosine recombinase XerD.